A 305-amino-acid chain; its full sequence is Mitochondrial uncoupling protein 3 (305 aa).

Solcar repeat units lie at residues Thr-14–Leu-100, Leu-112–Phe-204, and Asp-213–Leu-299. The next 6 membrane-spanning stretches (helical) occupy residues Ile-16–Thr-36, Val-69–Ile-89, Ala-118–Val-138, Lys-178–Tyr-198, Thr-219–Val-239, and Trp-272–Ser-292.

The protein belongs to the mitochondrial carrier (TC 2.A.29) family.

It localises to the mitochondrion inner membrane. Its function is as follows. PUMPS are mitochondrial transporter proteins that create proton leaks across the inner mitochondrial membrane, thus uncoupling oxidative phosphorylation. This leads to a decrease in the efficiency of oxidative phosphorylation and an increase in heat production. May be involved in protecting plant cells against oxidative stress damage. The chain is Mitochondrial uncoupling protein 3 (PUMP3) from Arabidopsis thaliana (Mouse-ear cress).